The chain runs to 394 residues: DNA repair protein brc-2 (394 aa).

A compositionally biased stretch (basic and acidic residues) spans 1-12 (MGDSSKKVKDSF). Disordered stretches follow at residues 1–30 (MGDS…VPIS) and 56–136 (MLNS…EKKK). Residues 1 to 60 (MGDSSKKVKDSFDTISEPDSFDEPKGVPISMEPVFSTAAGIRIDVKQESIDKSKKMLNSD) form an interaction with rad-51 region. Positions 28–62 (PISMEPVFSTAAGIRIDVKQESIDKSKKMLNSDLK) are BRCA2 repeat-like region. A compositionally biased stretch (low complexity) spans 56–73 (MLNSDLKSKSSSKGGFSS). The interval 60–89 (DLKSKSSSKGGFSSPLVRKNNGSSAFVSPF) is interaction with rad-51-DNA complexes. Residues 124 to 134 (KKSKKHSKKEK) show a composition bias toward basic residues. The interval 371-389 (WKDFGSYLKHKEDKKKRRS) is required for ssDNA binding.

As to quaternary structure, interacts (via N-terminus) with rad-51; regulates rad-51 recruitment to sites of DNA double strand breaks. In terms of tissue distribution, expressed in the germline, with highest expression in cells undergoing oogenesis.

It is found in the nucleus. Its subcellular location is the chromosome. Its function is as follows. Required for the homologous recombination repair of DNA double strand breaks, thereby playing a role in chromosome integrity. Acts by targeting rad-51 to sites of DNA damage and stabilizing rad-51-DNA filaments by blocking ATP hydrolysis catalyzed by rad-51. Promotes rad-51 mediated displacement-loop (D-loop) formation during strand invasion between the invading single-stranded DNA (ssDNA) and the homologous duplex DNA. Also functions independently of rad-51 in DNA double-strand break (DSB) repair by promoting DNA single-strand annealing (SSA) when the homologous recombination (HR) and non-homologous end joining (NHEJ) pathways are compromised. Binds selectively to single-stranded (ssDNA) via its C-terminus. Involved in telomere maintenance and replicative senescence. The polypeptide is DNA repair protein brc-2 (Caenorhabditis elegans).